Here is a 613-residue protein sequence, read N- to C-terminus: Xaa-Pro aminopeptidase ApepP (613 aa).

Positions 77 and 388 each coordinate substrate. Residues aspartate 408, aspartate 419, and histidine 482 each coordinate Mn(2+). Substrate is bound by residues histidine 482, histidine 491, and glutamate 517. The Mn(2+) site is built by glutamate 517 and glutamate 531.

It belongs to the peptidase M24B family. It depends on Mn(2+) as a cofactor. As to expression, detected in gut, brain, testes and ovary.

It localises to the cytoplasm. It catalyses the reaction Release of any N-terminal amino acid, including proline, that is linked to proline, even from a dipeptide or tripeptide.. Its activity is regulated as follows. Inhibited by the chelating agent EDTA. Divalent metal ions have substrate- and concentration-dependent effects on activity. Activity towards bradykinin is inhibited with increasing Mn(2+) concentration. Activity towards substance P is stimulated by low Mn(2+) concentrations (in the range 10 uM-1 mM) but inhibited by Mn(2+) concentrations in excess of 1 mM. Ca(2+), Mg(2+) and Co(2+) stimulate activity towards substance P at concentrations of 10-100 uM but are inhibitory at concentrations of 1 mM. Zn(2+), Ni(2+) and Cu(2+) strongly inhibit activity towards substance P at concentrations of 1 mM. Catalyzes the removal of a penultimate prolyl residue from the N-termini of peptides, such as Arg-Pro-Pro. The polypeptide is Xaa-Pro aminopeptidase ApepP (Drosophila melanogaster (Fruit fly)).